We begin with the raw amino-acid sequence, 215 residues long: Adenylate kinase (215 aa).

10–15 contributes to the ATP binding site; it reads GAGKGT. Residues 30-59 are NMP; that stretch reads STGDMLREAVAAGTELGKKVKEIIEKGLLV. AMP contacts are provided by residues T31, R36, 57–59, 85–88, and Q92; these read LLV and GFPR. An LID region spans residues 126–163; it reads SRRVCPSCGKVYNLLTIKPKNDMLCDDCNIGLIQREDD. R127 provides a ligand contact to ATP. C130 and C133 together coordinate Zn(2+). Residue 136 to 137 coordinates ATP; sequence VY. Zn(2+) contacts are provided by C150 and C153. The AMP site is built by R160 and R171. L199 contacts ATP.

This sequence belongs to the adenylate kinase family. In terms of assembly, monomer.

Its subcellular location is the cytoplasm. It catalyses the reaction AMP + ATP = 2 ADP. It functions in the pathway purine metabolism; AMP biosynthesis via salvage pathway; AMP from ADP: step 1/1. Its function is as follows. Catalyzes the reversible transfer of the terminal phosphate group between ATP and AMP. Plays an important role in cellular energy homeostasis and in adenine nucleotide metabolism. This chain is Adenylate kinase, found in Kosmotoga olearia (strain ATCC BAA-1733 / DSM 21960 / TBF 19.5.1).